A 511-amino-acid polypeptide reads, in one-letter code: Bifunctional purine biosynthesis protein PurH (511 aa).

The 145-residue stretch at 1-145 (MKKRALVSVS…KNHQFVSVIV (145 aa)) folds into the MGS-like domain.

The protein belongs to the PurH family.

It catalyses the reaction (6R)-10-formyltetrahydrofolate + 5-amino-1-(5-phospho-beta-D-ribosyl)imidazole-4-carboxamide = 5-formamido-1-(5-phospho-D-ribosyl)imidazole-4-carboxamide + (6S)-5,6,7,8-tetrahydrofolate. It carries out the reaction IMP + H2O = 5-formamido-1-(5-phospho-D-ribosyl)imidazole-4-carboxamide. Its pathway is purine metabolism; IMP biosynthesis via de novo pathway; 5-formamido-1-(5-phospho-D-ribosyl)imidazole-4-carboxamide from 5-amino-1-(5-phospho-D-ribosyl)imidazole-4-carboxamide (10-formyl THF route): step 1/1. The protein operates within purine metabolism; IMP biosynthesis via de novo pathway; IMP from 5-formamido-1-(5-phospho-D-ribosyl)imidazole-4-carboxamide: step 1/1. This Bacillus cereus (strain G9842) protein is Bifunctional purine biosynthesis protein PurH.